A 183-amino-acid chain; its full sequence is Capsid protein (183 aa).

The segment at 143–183 (LPENAVVRRRGRSPRRRTPSPRRRRSQSPRRRRSQSRGSQC) is disordered. Basic residues predominate over residues 149 to 177 (VRRRGRSPRRRTPSPRRRRSQSPRRRRSQ). A phosphoserine; by host mark is found at S155, S162, and S170. The stretch at 155-161 (SPRRRTP) is one 1; half-length repeat. A 3 X 8 AA repeats of S-P-R-R-R-[PR]-S-Q region spans residues 155 to 177 (SPRRRTPSPRRRRSQSPRRRRSQ). Positions 158-175 (RRTPSPRRRRSQSPRRRR) match the Bipartite nuclear localization signal motif. 2 consecutive repeat copies span residues 162–169 (SPRRRRSQ) and 170–177 (SPRRRRSQ). The RNA binding stretch occupies residues 177 to 183 (QSRGSQC).

It belongs to the orthohepadnavirus core antigen family. Homodimerizes, then multimerizes. Interacts with cytosol exposed regions of viral L glycoprotein present in the reticulum-to-Golgi compartment. Interacts with human FLNB. Phosphorylated form interacts with host importin alpha; this interaction depends on the exposure of the NLS, which itself depends upon genome maturation and/or phosphorylation of the capsid protein. Interacts with host NUP153. Phosphorylated by host SRPK1, SRPK2, and maybe protein kinase C or GAPDH. Phosphorylation is critical for pregenomic RNA packaging. Protein kinase C phosphorylation is stimulated by HBx protein and may play a role in transport of the viral genome to the nucleus at the late step during the viral replication cycle.

Its subcellular location is the virion. The protein resides in the host cytoplasm. Self assembles to form an icosahedral capsid. Most capsids appear to be large particles with an icosahedral symmetry of T=4 and consist of 240 copies of capsid protein, though a fraction forms smaller T=3 particles consisting of 180 capsid proteins. Entering capsids are transported along microtubules to the nucleus. Phosphorylation of the capsid is thought to induce exposure of nuclear localization signal in the C-terminal portion of the capsid protein that allows binding to the nuclear pore complex via the importin (karyopherin-) alpha and beta. Capsids are imported in intact form through the nuclear pore into the nuclear basket, where it probably binds NUP153. Only capsids that contain the mature viral genome can release the viral DNA and capsid protein into the nucleoplasm. Immature capsids get stuck in the basket. Capsids encapsulate the pre-genomic RNA and the P protein. Pre-genomic RNA is reverse-transcribed into DNA while the capsid is still in the cytoplasm. The capsid can then either be directed to the nucleus, providing more genomes for transcription, or bud through the endoplasmic reticulum to provide new virions. The sequence is that of Capsid protein from Homo sapiens (Human).